We begin with the raw amino-acid sequence, 72 residues long: Translation initiation factor IF-1 (72 aa).

In terms of domain architecture, S1-like spans 1-72; the sequence is MAKEEMLEFP…TKGRINYRFK (72 aa).

It belongs to the IF-1 family. In terms of assembly, component of the 30S ribosomal translation pre-initiation complex which assembles on the 30S ribosome in the order IF-2 and IF-3, IF-1 and N-formylmethionyl-tRNA(fMet); mRNA recruitment can occur at any time during PIC assembly.

It localises to the cytoplasm. In terms of biological role, one of the essential components for the initiation of protein synthesis. Stabilizes the binding of IF-2 and IF-3 on the 30S subunit to which N-formylmethionyl-tRNA(fMet) subsequently binds. Helps modulate mRNA selection, yielding the 30S pre-initiation complex (PIC). Upon addition of the 50S ribosomal subunit IF-1, IF-2 and IF-3 are released leaving the mature 70S translation initiation complex. The protein is Translation initiation factor IF-1 of Paracoccus denitrificans (strain Pd 1222).